We begin with the raw amino-acid sequence, 236 residues long: MIEQQQFGQSRICYDSEWVSSPELALFDPQYWQAQNKVVGSATGRGTTWFVQLPKITAALRHYRRGGLFGKLVKDHYWFRSWSATRSFAEFHLLKQLREAGVNVPRPIAAYAMRKGLFYQADLLSERIANAQDLVTILQKHSLNAELYQKIGVEIAKMHRVGVNHTDLNIHNILIDAQETIWIIDFDKCYPQAGDGWKQENLDRLKRSFNKERVKRSIHWHDKDFQALLTGYESQQ.

Asp-167 is a catalytic residue.

Belongs to the protein kinase superfamily. KdkA/RfaP family.

Its subcellular location is the cell inner membrane. It catalyses the reaction an alpha-Kdo-(2-&gt;6)-lipid IVA + ATP = a 4-O-phospho-alpha-Kdo-(2-&gt;6)-lipid IVA + ADP + H(+). It participates in bacterial outer membrane biogenesis; LPS core biosynthesis. Its function is as follows. Catalyzes the ATP-dependent phosphorylation of the 3-deoxy-D-manno-octulosonic acid (Kdo) residue in Kdo-lipid IV(A) at the 4-OH position. This is 3-deoxy-D-manno-octulosonic acid kinase from Vibrio vulnificus (strain YJ016).